The sequence spans 507 residues: F-box only protein 31 (507 aa).

The interval 19–42 is disordered; it reads RQQRRGPAETAAADSEADTDPEEE. Serine 33 bears the Phosphoserine mark. Residues 33-42 show a composition bias toward acidic residues; sequence SEADTDPEEE. Threonine 37 is modified (phosphothreonine). Positions 50–55 match the D box motif; that stretch reads RCSLLE. An F-box domain is found at 50–96; the sequence is RCSLLELPPELLVEIFASLPGTDLPSLAQVCSRFRRILHTDTIWRRR. Zn(2+) contacts are provided by cysteine 192, histidine 200, cysteine 216, and histidine 222. Serine 264 carries the post-translational modification Phosphoserine; by ATM. The short motif at 283 to 285 is the DDL motif element; sequence DDL. Residues 366-417 form a disordered region; the sequence is EQEAGEGAAPPREPSAKAADGPPAKDGKEPGGGAEAAEQSASSGQGQPFVLP. Residues 400-412 show a composition bias toward low complexity; sequence EAAEQSASSGQGQ. Serine 448 is subject to Phosphoserine.

Belongs to the FBXO31 family. As to quaternary structure, part of a SCF (SKP1-cullin-F-box) protein ligase complex SCF(FBXO31) composed of CUL1, SKP1, RBX1 and FBXO31. Interacts (when phosphorylated at Ser-33) with CDC20, promoting ubiquitination by the APC/C complex. Post-translationally, phosphorylation at Ser-264 by ATM following gamma-irradiation results in its stabilization. Phosphorylation at Ser-448 in absence of stress promotes its ubiquitination and degradation by the SCF(FBXO46) complex. Phosphorylation at Ser-33 by AKT1 promotes association with CDC20 and ubiquitination by the APC/C complex. Ubiquitinated by the SCF(FBXO46) complex in absence of stress, promoting its degradation. Ubiquitinated by the APC/C complex following phosphorylation at Ser-33, leading to its degradation by the proteasome.

It is found in the cytoplasm. It localises to the cytoskeleton. The protein localises to the microtubule organizing center. Its subcellular location is the centrosome. It functions in the pathway protein modification; protein ubiquitination. Functionally, substrate-recognition component of the SCF(FBXO31) protein ligase complex, which specifically mediates the ubiquitination of proteins amidated at their C-terminus in response to oxidative stress, leading to their degradation by the proteasome. FBXO31 specifically recognizes and binds C-terminal peptides bearing an amide: C-terminal amidation in response to oxidative stress takes place following protein fragmentation. The SCF(FBXO31) also plays a role in G1 arrest following DNA damage by mediating ubiquitination of phosphorylated cyclin-D1 (CCND1), promoting its degradation by the proteasome, resulting in G1 arrest. The SCF(FBXO31) complex is however not a major regulator of CCND1 stability during the G1/S transition. In response to genotoxic stress, the SCF(FBXO31) complex directs ubiquitination and degradation of phosphorylated MDM2, thereby promoting p53/TP53-mediated DNA damage response. SCF(FBXO31) complex is required for genomic integrity by catalyzing ubiquitination and degradation of cyclin-A (CCNA1 and/or CCNA2) during the G1 phase. In response to genotoxic stress, the SCF(FBXO31) complex directs ubiquitination and degradation of phosphorylated FBXO46 and MAP2K6. SCF(FBXO31) complex promotes ubiquitination and degradation of CDT1 during the G2 phase to prevent re-replication. The SCF(FBXO31) complex also mediates ubiquitination and degradation of DUSP6, OGT and PARD6A. The polypeptide is F-box only protein 31 (Mus musculus (Mouse)).